The sequence spans 298 residues: Ribosomal protein L11 methyltransferase (298 aa).

Residues threonine 139, glycine 163, aspartate 185, and asparagine 232 each coordinate S-adenosyl-L-methionine.

Belongs to the methyltransferase superfamily. PrmA family.

The protein resides in the cytoplasm. It catalyses the reaction L-lysyl-[protein] + 3 S-adenosyl-L-methionine = N(6),N(6),N(6)-trimethyl-L-lysyl-[protein] + 3 S-adenosyl-L-homocysteine + 3 H(+). Its function is as follows. Methylates ribosomal protein L11. The sequence is that of Ribosomal protein L11 methyltransferase from Gloeothece citriformis (strain PCC 7424) (Cyanothece sp. (strain PCC 7424)).